Reading from the N-terminus, the 343-residue chain is Mesaconyl-CoA hydratase (343 aa).

A MaoC-like domain is found at 47–116; the sequence is SDEFARACGL…STVIGLKENS (70 aa). Substrate contacts are provided by residues 60–63, 83–86, and 94–96; these read PVDE, VANL, and LKP.

It carries out the reaction (2R,3S)-beta-methylmalyl-CoA = 2-methylfumaryl-CoA + H2O. Its function is as follows. Involved in the ethylmalonyl-CoA pathway for acetate assimilation. Catalyzes the reversible hydration of mesaconyl-CoA (2-methylfumaryl-CoA) to yield beta-methylmalyl-CoA ((2R,3S)-beta-methylmalyl-CoA). The protein is Mesaconyl-CoA hydratase (mch) of Cereibacter sphaeroides (strain ATCC 17023 / DSM 158 / JCM 6121 / CCUG 31486 / LMG 2827 / NBRC 12203 / NCIMB 8253 / ATH 2.4.1.) (Rhodobacter sphaeroides).